The chain runs to 556 residues: uncharacterized protein (556 aa).

The disordered stretch occupies residues 69–129 (RRGHTSGHAS…SSARSSSTSG (61 aa)). Low complexity-rich tracts occupy residues 74–85 (SGHASEHTSSSR) and 93–129 (SMSSSSESDSDSVSSESNPKSYSDSSTSSARSSSTSG). Residues 379-399 (LGLYIFIGVLLGLIGVIGLFI) traverse the membrane as a helical segment. The segment at 498–541 (CTICLCEYSEESPLYRELPCHHIFHPACIDPYLLKNSDLCPLCK) adopts an RING-type; atypical zinc-finger fold.

The protein localises to the vacuole membrane. It is found in the cell membrane. This is an uncharacterized protein from Schizosaccharomyces pombe (strain 972 / ATCC 24843) (Fission yeast).